Consider the following 127-residue polypeptide: Fluoride-specific ion channel FluC (127 aa).

A run of 4 helical transmembrane segments spans residues Leu4 to Met24, Leu35 to Phe55, Thr71 to Leu91, and Val103 to Ala123. Residues Gly75 and Thr78 each coordinate Na(+).

This sequence belongs to the fluoride channel Fluc/FEX (TC 1.A.43) family.

It localises to the cell inner membrane. The enzyme catalyses fluoride(in) = fluoride(out). Its activity is regulated as follows. Na(+) is not transported, but it plays an essential structural role and its presence is essential for fluoride channel function. Fluoride-specific ion channel. Important for reducing fluoride concentration in the cell, thus reducing its toxicity. The protein is Fluoride-specific ion channel FluC of Escherichia coli O7:K1 (strain IAI39 / ExPEC).